Consider the following 396-residue polypeptide: Elongation factor Tu (396 aa).

The tr-type G domain maps to 11–205 (KPHVNIGTIG…VIDEYIPTPV (195 aa)). Residues 20-27 (GHVDHGKT) form a G1 region. 20–27 (GHVDHGKT) is a binding site for GTP. A Mg(2+)-binding site is contributed by Thr27. Residues 61-65 (GITIN) are G2. The segment at 82-85 (DAPG) is G3. Residues 82–86 (DAPGH) and 137–140 (NKTD) contribute to the GTP site. The tract at residues 137–140 (NKTD) is G4. The interval 175–177 (SAL) is G5.

The protein belongs to the TRAFAC class translation factor GTPase superfamily. Classic translation factor GTPase family. EF-Tu/EF-1A subfamily. As to quaternary structure, monomer.

Its subcellular location is the cytoplasm. The enzyme catalyses GTP + H2O = GDP + phosphate + H(+). GTP hydrolase that promotes the GTP-dependent binding of aminoacyl-tRNA to the A-site of ribosomes during protein biosynthesis. The polypeptide is Elongation factor Tu (Oenococcus oeni (strain ATCC BAA-331 / PSU-1)).